A 429-amino-acid polypeptide reads, in one-letter code: Glutamate-1-semialdehyde 2,1-aminomutase (429 aa).

Position 265 is an N6-(pyridoxal phosphate)lysine (Lys265).

It belongs to the class-III pyridoxal-phosphate-dependent aminotransferase family. HemL subfamily. As to quaternary structure, homodimer. It depends on pyridoxal 5'-phosphate as a cofactor.

The protein resides in the cytoplasm. The catalysed reaction is (S)-4-amino-5-oxopentanoate = 5-aminolevulinate. The protein operates within porphyrin-containing compound metabolism; protoporphyrin-IX biosynthesis; 5-aminolevulinate from L-glutamyl-tRNA(Glu): step 2/2. This is Glutamate-1-semialdehyde 2,1-aminomutase from Acidobacterium capsulatum (strain ATCC 51196 / DSM 11244 / BCRC 80197 / JCM 7670 / NBRC 15755 / NCIMB 13165 / 161).